A 347-amino-acid polypeptide reads, in one-letter code: Holliday junction branch migration complex subunit RuvB (347 aa).

Residues 1 to 181 (MTRNSLLNPE…FGIPVRLQFY (181 aa)) form a large ATPase domain (RuvB-L) region. Leu-20, Arg-21, Gly-62, Lys-65, Thr-66, Thr-67, Arg-171, Tyr-181, and Arg-218 together coordinate ATP. A Mg(2+)-binding site is contributed by Thr-66. The interval 182-252 (SIEELRQVIT…IADEALNRLE (71 aa)) is small ATPAse domain (RuvB-S). Residues 255–347 (KLGLDLMDRR…SEIKNQPGLL (93 aa)) are head domain (RuvB-H). 3 residues coordinate DNA: Arg-291, Arg-310, and Arg-315.

Belongs to the RuvB family. As to quaternary structure, homohexamer. Forms an RuvA(8)-RuvB(12)-Holliday junction (HJ) complex. HJ DNA is sandwiched between 2 RuvA tetramers; dsDNA enters through RuvA and exits via RuvB. An RuvB hexamer assembles on each DNA strand where it exits the tetramer. Each RuvB hexamer is contacted by two RuvA subunits (via domain III) on 2 adjacent RuvB subunits; this complex drives branch migration. In the full resolvosome a probable DNA-RuvA(4)-RuvB(12)-RuvC(2) complex forms which resolves the HJ.

Its subcellular location is the cytoplasm. It carries out the reaction ATP + H2O = ADP + phosphate + H(+). Its function is as follows. The RuvA-RuvB-RuvC complex processes Holliday junction (HJ) DNA during genetic recombination and DNA repair, while the RuvA-RuvB complex plays an important role in the rescue of blocked DNA replication forks via replication fork reversal (RFR). RuvA specifically binds to HJ cruciform DNA, conferring on it an open structure. The RuvB hexamer acts as an ATP-dependent pump, pulling dsDNA into and through the RuvAB complex. RuvB forms 2 homohexamers on either side of HJ DNA bound by 1 or 2 RuvA tetramers; 4 subunits per hexamer contact DNA at a time. Coordinated motions by a converter formed by DNA-disengaged RuvB subunits stimulates ATP hydrolysis and nucleotide exchange. Immobilization of the converter enables RuvB to convert the ATP-contained energy into a lever motion, pulling 2 nucleotides of DNA out of the RuvA tetramer per ATP hydrolyzed, thus driving DNA branch migration. The RuvB motors rotate together with the DNA substrate, which together with the progressing nucleotide cycle form the mechanistic basis for DNA recombination by continuous HJ branch migration. Branch migration allows RuvC to scan DNA until it finds its consensus sequence, where it cleaves and resolves cruciform DNA. In Zymomonas mobilis subsp. mobilis (strain ATCC 31821 / ZM4 / CP4), this protein is Holliday junction branch migration complex subunit RuvB.